Consider the following 170-residue polypeptide: Envelope protein 166 (170 aa).

A topological domain (intravirion) is located at residue Met1. A helical membrane pass occupies residues 2–22 (FYPVVQVLIGIILVIILILGF). The Virion surface portion of the chain corresponds to 23-170 (YHMKHKPPKK…TVMGIARNVL (148 aa)).

This sequence belongs to the asfivirus envelope protein p22 family.

Its subcellular location is the virion membrane. It localises to the host cell membrane. The sequence is that of Envelope protein 166 from Ornithodoros (relapsing fever ticks).